Here is a 345-residue protein sequence, read N- to C-terminus: Very-long-chain 3-oxoacyl-CoA reductase (345 aa).

Residues 26 to 46 (GAAVLLATGGLFLASRVLTFV) form a helical membrane-spanning segment. NADP(+) is bound by residues valine 71, aspartate 125, aspartate 133, asparagine 152, tyrosine 219, lysine 223, isoleucine 252, and serine 254. Tyrosine 219 serves as the catalytic Proton donor. The active-site Lowers pKa of active site Tyr is the lysine 223.

It belongs to the short-chain dehydrogenases/reductases (SDR) family.

The protein resides in the endoplasmic reticulum membrane. The catalysed reaction is a very-long-chain (3R)-3-hydroxyacyl-CoA + NADP(+) = a very-long-chain 3-oxoacyl-CoA + NADPH + H(+). Its pathway is lipid metabolism; fatty acid biosynthesis. Component of the microsomal membrane bound fatty acid elongation system, which produces the 26-carbon very long-chain fatty acids (VLCFA) from palmitate. Catalyzes the reduction of the 3-ketoacyl-CoA intermediate that is formed in each cycle of fatty acid elongation. VLCFAs serve as precursors for ceramide and sphingolipids. The polypeptide is Very-long-chain 3-oxoacyl-CoA reductase (Aspergillus clavatus (strain ATCC 1007 / CBS 513.65 / DSM 816 / NCTC 3887 / NRRL 1 / QM 1276 / 107)).